Reading from the N-terminus, the 297-residue chain is Phosphoribosylaminoimidazole-succinocarboxamide synthase (297 aa).

It belongs to the SAICAR synthetase family.

It carries out the reaction 5-amino-1-(5-phospho-D-ribosyl)imidazole-4-carboxylate + L-aspartate + ATP = (2S)-2-[5-amino-1-(5-phospho-beta-D-ribosyl)imidazole-4-carboxamido]succinate + ADP + phosphate + 2 H(+). Its pathway is purine metabolism; IMP biosynthesis via de novo pathway; 5-amino-1-(5-phospho-D-ribosyl)imidazole-4-carboxamide from 5-amino-1-(5-phospho-D-ribosyl)imidazole-4-carboxylate: step 1/2. The polypeptide is Phosphoribosylaminoimidazole-succinocarboxamide synthase (Corynebacterium glutamicum (strain R)).